The sequence spans 256 residues: 2-C-methyl-D-erythritol 4-phosphate cytidylyltransferase (256 aa).

It belongs to the IspD/TarI cytidylyltransferase family. IspD subfamily.

It carries out the reaction 2-C-methyl-D-erythritol 4-phosphate + CTP + H(+) = 4-CDP-2-C-methyl-D-erythritol + diphosphate. It participates in isoprenoid biosynthesis; isopentenyl diphosphate biosynthesis via DXP pathway; isopentenyl diphosphate from 1-deoxy-D-xylulose 5-phosphate: step 2/6. Its function is as follows. Catalyzes the formation of 4-diphosphocytidyl-2-C-methyl-D-erythritol from CTP and 2-C-methyl-D-erythritol 4-phosphate (MEP). This Corynebacterium glutamicum (strain ATCC 13032 / DSM 20300 / JCM 1318 / BCRC 11384 / CCUG 27702 / LMG 3730 / NBRC 12168 / NCIMB 10025 / NRRL B-2784 / 534) protein is 2-C-methyl-D-erythritol 4-phosphate cytidylyltransferase.